Here is a 359-residue protein sequence, read N- to C-terminus: WAT1-related protein At4g16620 (359 aa).

10 helical membrane-spanning segments follow: residues 5–25, 41–61, 77–97, 105–125, 143–163, 183–203, 206–226, 246–266, 279–299, and 305–325; these read ETLIEAGIIGGLAGAQVIYAG, LLIVILCTFASVLLITPLAFL, IKLVLVALAGVTLFQGLFLEG, MATAMPNLCPAFIFVIAWAAG, TVLCVMGALIMSLMHSTTATL, ILGCLYLLLAICGLSSSIVLQ, ILAEFPAPISMFSMVSLMGGI, VIGLGHLVGYAILGGLVSGGG, PVIVSLFSPIATVVCVVVSAF, and FNLGSFAGMALMFGGLYFVLW. The 125-residue stretch at 30 to 154 folds into the EamA 1 domain; the sequence is LSQLLSLGID…LCVMGALIMS (125 aa). The EamA 2 domain occupies 206–324; that stretch reads ILAEFPAPIS…LMFGGLYFVL (119 aa).

This sequence belongs to the drug/metabolite transporter (DMT) superfamily. Plant drug/metabolite exporter (P-DME) (TC 2.A.7.4) family.

The protein resides in the membrane. In Arabidopsis thaliana (Mouse-ear cress), this protein is WAT1-related protein At4g16620.